The sequence spans 1128 residues: MSRSVLQPSQQKLAEKLTILNDRGVGMLTRLYNIKKACGDPKAKPSYLIDKNLESAVKFIVRKFPAVETRNNNQQLAQLQKEKSEILKNLALYYFTFVDVMEFKDHVCELLNTIDVCQVFFDITVNFDLTKNYLDLIITYTTLMILLSRIEERKAIIGLYNYAHEMTHGASDREYPRLGQMIVDYENPLKKMMEEFVPHSKSLSDALISLQMVYPRRNLSADQWRNAQLLSLISAPSTMLNPAQSDTMPCEYLSLDAMEKWIIFGFILCHGILNTDATALNLWKLALQSSSCLSLFRDEVFHIHKAAEDLFVNIRGYNKRINDIRECKEAAVSHAGSMHRERRKFLRSALKELATVLSDQPGLLGPKALFVFMALSFARDEIIWLLRHADNMPKKSADDFIDKHIAELIFYMEELRAHVRKYGPVMQRYYVQYLSGFDAVVLNELVQNLSVCPEDESIIMSSFVNTMTSLSVKQVEDGEVFDFRGMRLDWFRLQAYTSVSKASLGLADHRELGKMMNTIIFHTKMVDSLVEMLVETSDLSIFCFYSRAFEKMFQQCLELPSQSRYSIAFPLLCTHFMSCTHELCPEERHHIGDRSLSLCNMFLDEMAKQARNLITDICTEQCTLSDQLLPKHCAKTISQAVNKKSKKQTGKKGEPEREKPGVESMRKNRLVVTNLDKLHTALSELCFSINYVPNMVVWEHTFTPREYLTSHLEIRFTKSIVGMTMYNQATQEIAKPSELLTSVRAYMTVLQSIENYVQIDITRVFNNVLLQQTQHLDSHGEPTITSLYTNWYLETLLRQVSNGHIAYFPAMKAFVNLPTENELTFNAEEYSDISEMRSLSELLGPYGMKFLSESLMWHISSQVAELKKLVVENVDVLTQMRTSFDKPDQMAALFKRLSSVDSVLKRMTIIGVILSFRSLAQEALRDVLSYHIPFLVSSIEDFKDHIPRETDMKVAMNVYELSSAAGLPCEIDPALVVALSSQKSENISPEEEYKIACLLMVFVAVSLPTLASNVMSQYSPAIEGHCNNIHCLAKAINQIAAALFTIHKGSIEDRLKEFLALASSSLLKIGQETDKTTTRNRESVYLLLDMIVQESPFLTMDLLESCFPYVLLRNAYHAVYKQSVTSSA.

Serine 2 carries the post-translational modification N-acetylserine. The interval 640 to 665 (AVNKKSKKQTGKKGEPEREKPGVESM) is disordered. A compositionally biased stretch (basic and acidic residues) spans 651 to 665 (KKGEPEREKPGVESM). A helical membrane pass occupies residues 995–1015 (IACLLMVFVAVSLPTLASNVM).

It belongs to the HEM-1/HEM-2 family. As to quaternary structure, component of the WAVE1 complex composed of ABI2, CYFIP1 or CYFIP2, BRK1, NCKAP1 and WASF1/WAVE1. Within the complex, a heterodimer containing NCKAP1 and CYFIP1 interacts with a heterotrimer formed by WAVE1, ABI2 and BRK1. Component of the WAVE2 complex composed of ABI1, CYFIP1/SRA1, NCKAP1/NAP1 and WASF2/WAVE2. CYFIP2 binds to activated RAC1 which causes the complex to dissociate, releasing activated WASF1. The complex can also be activated by NCK1. Associates preferentially with the first SH3 domain of NCK. Interacts with NYAP1, NYAP2 and MYO16. Interacts with TMEM132D. (Microbial infection) Interacts with human cytomegalovirus protein UL135. Expressed in all tissues examined except peripheral blood leukocytes, with highest expression in brain, heart, and skeletal muscle. Expressed in cells of various brain regions including Purkinje cells and dentate nucleus of the cerebellum, CA4 region and dentate gyrus of the hippocampus, and in frontal gray and white matter.

It is found in the cell membrane. The protein localises to the cell projection. The protein resides in the lamellipodium membrane. Its function is as follows. Part of the WAVE complex that regulates lamellipodia formation. The WAVE complex regulates actin filament reorganization via its interaction with the Arp2/3 complex. Actin remodeling activity is regulated by RAC1. As component of the WAVE1 complex, required for BDNF-NTRK2 endocytic trafficking and signaling from early endosomes. This chain is Nck-associated protein 1 (NCKAP1), found in Homo sapiens (Human).